We begin with the raw amino-acid sequence, 148 residues long: EKC/KEOPS complex subunit Lage3 (148 aa).

Positions 1-21 (MQTAHTGLSHTADGADGQTSR) are disordered.

The protein belongs to the CTAG/PCC1 family. As to quaternary structure, component of the EKC/KEOPS complex composed of at least GON7, TP53RK, TPRKB, OSGEP and LAGE3; the whole complex dimerizes.

The protein resides in the cytoplasm. Its subcellular location is the nucleus. Component of the EKC/KEOPS complex that is required for the formation of a threonylcarbamoyl group on adenosine at position 37 (t(6)A37) in tRNAs that read codons beginning with adenine. The complex is probably involved in the transfer of the threonylcarbamoyl moiety of threonylcarbamoyl-AMP (TC-AMP) to the N6 group of A37. LAGE3 functions as a dimerization module for the complex. The sequence is that of EKC/KEOPS complex subunit Lage3 from Mus musculus (Mouse).